The primary structure comprises 105 residues: Large ribosomal subunit protein uL24 (105 aa).

It belongs to the universal ribosomal protein uL24 family. As to quaternary structure, part of the 50S ribosomal subunit.

One of two assembly initiator proteins, it binds directly to the 5'-end of the 23S rRNA, where it nucleates assembly of the 50S subunit. In terms of biological role, one of the proteins that surrounds the polypeptide exit tunnel on the outside of the subunit. The protein is Large ribosomal subunit protein uL24 of Thermotoga petrophila (strain ATCC BAA-488 / DSM 13995 / JCM 10881 / RKU-1).